Reading from the N-terminus, the 189-residue chain is Chitin synthase 1 (189 aa).

It belongs to the chitin synthase family. Class I subfamily.

It is found in the cell membrane. It carries out the reaction [(1-&gt;4)-N-acetyl-beta-D-glucosaminyl](n) + UDP-N-acetyl-alpha-D-glucosamine = [(1-&gt;4)-N-acetyl-beta-D-glucosaminyl](n+1) + UDP + H(+). Polymerizes chitin, a structural polymer of the cell wall and septum, by transferring the sugar moiety of UDP-GlcNAc to the non-reducing end of the growing chitin polymer. This Rhinocladiella atrovirens protein is Chitin synthase 1 (CHS1).